Here is a 246-residue protein sequence, read N- to C-terminus: Aspartate/glutamate leucyltransferase (246 aa).

It belongs to the R-transferase family. Bpt subfamily.

The protein resides in the cytoplasm. The catalysed reaction is N-terminal L-glutamyl-[protein] + L-leucyl-tRNA(Leu) = N-terminal L-leucyl-L-glutamyl-[protein] + tRNA(Leu) + H(+). It carries out the reaction N-terminal L-aspartyl-[protein] + L-leucyl-tRNA(Leu) = N-terminal L-leucyl-L-aspartyl-[protein] + tRNA(Leu) + H(+). Functions in the N-end rule pathway of protein degradation where it conjugates Leu from its aminoacyl-tRNA to the N-termini of proteins containing an N-terminal aspartate or glutamate. The chain is Aspartate/glutamate leucyltransferase from Rhodospirillum rubrum (strain ATCC 11170 / ATH 1.1.1 / DSM 467 / LMG 4362 / NCIMB 8255 / S1).